Here is a 114-residue protein sequence, read N- to C-terminus: Iron-sulfur cluster insertion protein ErpA (114 aa).

Residues C42, C106, and C108 each contribute to the iron-sulfur cluster site.

It belongs to the HesB/IscA family. As to quaternary structure, homodimer. Iron-sulfur cluster serves as cofactor.

In terms of biological role, required for insertion of 4Fe-4S clusters for at least IspG. The polypeptide is Iron-sulfur cluster insertion protein ErpA (Cronobacter sakazakii (strain ATCC BAA-894) (Enterobacter sakazakii)).